Consider the following 125-residue polypeptide: Prepro-urotensin II-alpha (125 aa).

The N-terminal stretch at 1 to 21 is a signal peptide; it reads MMCNLLLSFSVLLLSCTHLVA. The propeptide occupies 109-111; it reads QFR. The cysteines at positions 119 and 124 are disulfide-linked.

Belongs to the urotensin-2 family.

Its subcellular location is the secreted. Functionally, urotensin is found in the teleost caudal neurosecretory system. It has a suggested role in osmoregulation and as a corticotropin-releasing factor. The non-hormonal portion of this precursor may be a urotensin binding protein, urophysin. This is Prepro-urotensin II-alpha from Cyprinus carpio (Common carp).